The primary structure comprises 205 residues: uncharacterized protein (205 aa).

Residues 51–189 (ANVDAVAILA…KKGFAIDVRL (139 aa)) enclose the Nudix hydrolase domain. A Nudix box motif is present at residues 90–111 (GLVDSKESCEDAAIRELREETG).

Belongs to the Nudix hydrolase family.

The protein resides in the cytoplasm. It is found in the nucleus. This is an uncharacterized protein from Schizosaccharomyces pombe (strain 972 / ATCC 24843) (Fission yeast).